Here is a 369-residue protein sequence, read N- to C-terminus: Cystathionine gamma-synthase (369 aa).

The residue at position 200 (lysine 200) is an N6-(pyridoxal phosphate)lysine.

This sequence belongs to the trans-sulfuration enzymes family. As to quaternary structure, homotetramer. Requires pyridoxal 5'-phosphate as cofactor.

The protein localises to the cytoplasm. The catalysed reaction is O-succinyl-L-homoserine + L-cysteine = L,L-cystathionine + succinate + H(+). Its function is as follows. Catalyzes the formation of L-cystathionine from O-succinyl-L-homoserine (OSHS) and L-cysteine, via a gamma-replacement reaction. In the absence of thiol, catalyzes gamma-elimination to form 2-oxobutanoate, succinate and ammonia. This Haemophilus influenzae (strain ATCC 51907 / DSM 11121 / KW20 / Rd) protein is Cystathionine gamma-synthase (metB).